Consider the following 442-residue polypeptide: Protein translocase subunit SecY (442 aa).

Helical transmembrane passes span 24–44, 76–96, 125–145, 149–169, 178–198, 212–232, 269–289, 312–332, 363–383, and 385–405; these read FLFL…PGIN, IFAL…LMTA, VLAL…GVAF, FGFY…MMWL, VGNG…PRAI, IFAL…VVFI, VIPA…GSWF, NILL…ALMF, GVLT…CLLP, and FLVV…LIVV.

This sequence belongs to the SecY/SEC61-alpha family. In terms of assembly, component of the Sec protein translocase complex. Heterotrimer consisting of SecY, SecE and SecG subunits. The heterotrimers can form oligomers, although 1 heterotrimer is thought to be able to translocate proteins. Interacts with the ribosome. Interacts with SecDF, and other proteins may be involved. Interacts with SecA.

It is found in the cell inner membrane. Its function is as follows. The central subunit of the protein translocation channel SecYEG. Consists of two halves formed by TMs 1-5 and 6-10. These two domains form a lateral gate at the front which open onto the bilayer between TMs 2 and 7, and are clamped together by SecE at the back. The channel is closed by both a pore ring composed of hydrophobic SecY resides and a short helix (helix 2A) on the extracellular side of the membrane which forms a plug. The plug probably moves laterally to allow the channel to open. The ring and the pore may move independently. The sequence is that of Protein translocase subunit SecY from Pseudomonas aeruginosa (strain ATCC 15692 / DSM 22644 / CIP 104116 / JCM 14847 / LMG 12228 / 1C / PRS 101 / PAO1).